We begin with the raw amino-acid sequence, 178 residues long: Large ribosomal subunit protein uL10 (178 aa).

This sequence belongs to the universal ribosomal protein uL10 family. As to quaternary structure, part of the ribosomal stalk of the 50S ribosomal subunit. The N-terminus interacts with L11 and the large rRNA to form the base of the stalk. The C-terminus forms an elongated spine to which L12 dimers bind in a sequential fashion forming a multimeric L10(L12)X complex.

Forms part of the ribosomal stalk, playing a central role in the interaction of the ribosome with GTP-bound translation factors. The protein is Large ribosomal subunit protein uL10 of Dictyoglomus turgidum (strain DSM 6724 / Z-1310).